We begin with the raw amino-acid sequence, 353 residues long: Photosystem II D2 protein (353 aa).

Residue Thr-2 is modified to N-acetylthreonine. Thr-2 carries the phosphothreonine modification. Residues 41 to 61 (CAYFALGGWFTGTTFVTSWYT) traverse the membrane as a helical segment. His-118 lines the chlorophyll a pocket. A helical membrane pass occupies residues 125–141 (GFMLRQFELARSVQLRP). The pheophytin a site is built by Gln-130 and Asn-143. Residues 153–166 (VFVSVFLIYPLGQS) form a helical membrane-spanning segment. His-198 provides a ligand contact to chlorophyll a. The helical transmembrane segment at 208–228 (AALLCAIHGATVENTLFEDGD) threads the bilayer. Residues His-215 and Phe-262 each coordinate a plastoquinone. His-215 lines the Fe cation pocket. His-269 contributes to the Fe cation binding site. The chain crosses the membrane as a helical span at residues 279–295 (GLWMSAIGVVGLALNLR).

This sequence belongs to the reaction center PufL/M/PsbA/D family. PSII is composed of 1 copy each of membrane proteins PsbA, PsbB, PsbC, PsbD, PsbE, PsbF, PsbH, PsbI, PsbJ, PsbK, PsbL, PsbM, PsbT, PsbX, PsbY, PsbZ, Psb30/Ycf12, at least 3 peripheral proteins of the oxygen-evolving complex and a large number of cofactors. It forms dimeric complexes. Requires The D1/D2 heterodimer binds P680, chlorophylls that are the primary electron donor of PSII, and subsequent electron acceptors. It shares a non-heme iron and each subunit binds pheophytin, quinone, additional chlorophylls, carotenoids and lipids. There is also a Cl(-1) ion associated with D1 and D2, which is required for oxygen evolution. The PSII complex binds additional chlorophylls, carotenoids and specific lipids. as cofactor. Phosphorylated on threonine residue(s); phosphorylation increases with increasing light levels.

It localises to the plastid. Its subcellular location is the chloroplast thylakoid membrane. It catalyses the reaction 2 a plastoquinone + 4 hnu + 2 H2O = 2 a plastoquinol + O2. Its function is as follows. Photosystem II (PSII) is a light-driven water:plastoquinone oxidoreductase that uses light energy to abstract electrons from H(2)O, generating O(2) and a proton gradient subsequently used for ATP formation. It consists of a core antenna complex that captures photons, and an electron transfer chain that converts photonic excitation into a charge separation. The D1/D2 (PsbA/PsbD) reaction center heterodimer binds P680, the primary electron donor of PSII as well as several subsequent electron acceptors. D2 is needed for assembly of a stable PSII complex. The chain is Photosystem II D2 protein from Marchantia polymorpha (Common liverwort).